The chain runs to 601 residues: Kelch-like ECH-associated protein 1A (601 aa).

The region spanning 44–117 (MDELRHHEML…VISRLIDFAY (74 aa)) is the BTB domain. The BACK domain maps to 153–253 (KNLEPSNVIG…LNAVHIYALP (101 aa)). 6 Kelch repeats span residues 292-337 (PTPH…PCSG), 338-388 (LGAC…PRNR), 389-435 (VGVG…ARLG), 436-482 (AGVA…VRSG), 484-529 (GVVC…CRSA), and 530-576 (HGVS…GRSG).

It belongs to the KEAP1 family. Homodimer and heterodimer; heterodimerizes with keap1b. Component of the BCR(KEAP1) E3 ubiquitin ligase complex, at least composed of 2 molecules of cul3, 2 molecules of keap1 (keap1a and/or keap1b), and rbx1. Interacts with nfe2l2/nrf2; the interaction is direct. In terms of processing, non-enzymatic covalent modifications of reactive cysteines by electrophile metabolites inactivate the BCR(KEAP1) complex. In terms of tissue distribution, widely expressed.

The protein resides in the cytoplasm. The protein localises to the nucleus. The protein operates within protein modification; protein ubiquitination. Ubiquitin ligase activity of the BCR(KEAP1) complex is inhibited by oxidative stress and electrophile metabolites such as sulforaphane. Electrophile metabolites react with reactive cysteine residues in keap1 and trigger non-enzymatic covalent modifications of these cysteine residues, leading to inactivate the ubiquitin ligase activity of the BCR(KEAP1) complex. Its function is as follows. Substrate-specific adapter of a BCR (BTB-CUL3-RBX1) E3 ubiquitin ligase complex that regulates the response to oxidative stress by targeting nfe2l2/nrf2 for ubiquitination. Keap1 acts as a key sensor of oxidative and electrophilic stress: in normal conditions, the BCR(KEAP1) complex mediates ubiquitination and degradation of nfe2l2/nrf2, a transcription factor regulating expression of many cytoprotective genes. In response to oxidative stress, different electrophile metabolites trigger non-enzymatic covalent modifications of highly reactive cysteine residues in KEAP1, leading to inactivate the ubiquitin ligase activity of the BCR(KEAP1) complex, promoting nfe2l2/nrf2 nuclear accumulation and expression of phase II detoxifying enzymes. The chain is Kelch-like ECH-associated protein 1A from Danio rerio (Zebrafish).